Here is a 268-residue protein sequence, read N- to C-terminus: Putative carbamate hydrolase RutD (268 aa).

One can recognise an AB hydrolase-1 domain in the interval 15–119; the sequence is PVMVMIAGLG…VIVNGWLSLS (105 aa).

It belongs to the AB hydrolase superfamily. Hydrolase RutD family.

The catalysed reaction is carbamate + 2 H(+) = NH4(+) + CO2. In terms of biological role, involved in pyrimidine catabolism. May facilitate the hydrolysis of carbamate, a reaction that can also occur spontaneously. This chain is Putative carbamate hydrolase RutD, found in Cronobacter sakazakii (strain ATCC BAA-894) (Enterobacter sakazakii).